Consider the following 310-residue polypeptide: Transcription initiation factor IIB (310 aa).

Repeat copies occupy residues 126–209 and 220–301.

The protein belongs to the TFIIB family.

Stabilizes TBP binding to an archaeal box-A promoter. Also responsible for recruiting RNA polymerase II to the pre-initiation complex (DNA-TBP-TFIIB). This chain is Transcription initiation factor IIB, found in Pyrodictium occultum.